The sequence spans 431 residues: Trigger factor (431 aa).

The PPIase FKBP-type domain occupies G164–P249.

It belongs to the FKBP-type PPIase family. Tig subfamily.

It is found in the cytoplasm. It catalyses the reaction [protein]-peptidylproline (omega=180) = [protein]-peptidylproline (omega=0). Functionally, involved in protein export. Acts as a chaperone by maintaining the newly synthesized protein in an open conformation. Functions as a peptidyl-prolyl cis-trans isomerase. This is Trigger factor from Clostridium tetani (strain Massachusetts / E88).